Reading from the N-terminus, the 112-residue chain is T cell receptor alpha variable 13-1 (112 aa).

Positions Met-1–Gly-20 are cleaved as a signal peptide. One can recognise an Ig-like domain in the interval Glu-21–Ser-112. A disulfide bridge links Cys-42 with Cys-109. The N-linked (GlcNAc...) asparagine glycan is linked to Asn-86.

As to quaternary structure, alpha-beta TR is a heterodimer composed of an alpha and beta chain; disulfide-linked. The alpha-beta TR is associated with the transmembrane signaling CD3 coreceptor proteins to form the TR-CD3 (TcR or TCR). The assembly of alpha-beta TR heterodimers with CD3 occurs in the endoplasmic reticulum where a single alpha-beta TR heterodimer associates with one CD3D-CD3E heterodimer, one CD3G-CD3E heterodimer and one CD247 homodimer forming a stable octameric structure. CD3D-CD3E and CD3G-CD3E heterodimers preferentially associate with TR alpha and TR beta chains, respectively. The association of the CD247 homodimer is the last step of TcR assembly in the endoplasmic reticulum and is required for transport to the cell surface.

The protein resides in the cell membrane. Functionally, v region of the variable domain of T cell receptor (TR) alpha chain that participates in the antigen recognition. Alpha-beta T cell receptors are antigen specific receptors which are essential to the immune response and are present on the cell surface of T lymphocytes. Recognize peptide-major histocompatibility (MH) (pMH) complexes that are displayed by antigen presenting cells (APC), a prerequisite for efficient T cell adaptive immunity against pathogens. Binding of alpha-beta TR to pMH complex initiates TR-CD3 clustering on the cell surface and intracellular activation of LCK that phosphorylates the ITAM motifs of CD3G, CD3D, CD3E and CD247 enabling the recruitment of ZAP70. In turn ZAP70 phosphorylates LAT, which recruits numerous signaling molecules to form the LAT signalosome. The LAT signalosome propagates signal branching to three major signaling pathways, the calcium, the mitogen-activated protein kinase (MAPK) kinase and the nuclear factor NF-kappa-B (NF-kB) pathways, leading to the mobilization of transcription factors that are critical for gene expression and essential for T cell growth and differentiation. The T cell repertoire is generated in the thymus, by V-(D)-J rearrangement. This repertoire is then shaped by intrathymic selection events to generate a peripheral T cell pool of self-MH restricted, non-autoaggressive T cells. Post-thymic interaction of alpha-beta TR with the pMH complexes shapes TR structural and functional avidity. The polypeptide is T cell receptor alpha variable 13-1 (Homo sapiens (Human)).